We begin with the raw amino-acid sequence, 225 residues long: Dynein axonemal assembly factor 19 (225 aa).

Positions 8–32 (DFRELERELANALAADQKYSRENDA) form a coiled coil.

Belongs to the DNAAF19/PR46b family. In terms of assembly, homodimer.

The protein localises to the cytoplasm. It is found in the cell projection. It localises to the cilium. Its subcellular location is the flagellum. Dynein-attachment factor required for cilia motility. The chain is Dynein axonemal assembly factor 19 (dnaaf19) from Xenopus tropicalis (Western clawed frog).